Reading from the N-terminus, the 297-residue chain is MIPLSIRVPASTANVGPGFDSVGIALSLYLHVVVKEESDKWQVIHSFEDSIPTDDKNLIVSTACKVCPSLSPHIIEVTSNIPLTRGLGSSASAIVAGIELANQLGNLNLTTDQKVQIATNFEGHPDNVAASILGGTVIGALDGKNVSVVRIESKELGVISLIPNEELNTEESRSVLPDVFPFHEAVKASAISNVLVAALCQKKWEVVGEMMERDHFHEPFRLELVPLLPSIRKCAKEFGAYGTALSGAGPSIFILTPYEKRQEIAEQLARVFTSMKVCELEIDHRGITVNKEEHIGL.

82 to 92 (PLTRGLGSSAS) contacts ATP.

This sequence belongs to the GHMP kinase family. Homoserine kinase subfamily.

The protein resides in the cytoplasm. It catalyses the reaction L-homoserine + ATP = O-phospho-L-homoserine + ADP + H(+). It participates in amino-acid biosynthesis; L-threonine biosynthesis; L-threonine from L-aspartate: step 4/5. Functionally, catalyzes the ATP-dependent phosphorylation of L-homoserine to L-homoserine phosphate. The chain is Homoserine kinase from Bacillus cereus (strain AH187).